We begin with the raw amino-acid sequence, 1076 residues long: Probable cellulose synthase A catalytic subunit 1 [UDP-forming] (1076 aa).

Residues 1–267 (MAANAGMVAG…SRIVPIPSNQ (267 aa)) lie on the Cytoplasmic side of the membrane. Positions 41, 44, 60, 63, 68, 71, 83, and 86 each coordinate Zn(2+). The segment at 41-87 (CQICGDTVGVSATGDVFVACNECAFPVCRPCYEYERKEGNQCCPQCK) adopts an RING-type; degenerate zinc-finger fold. The interval 119–179 (HGNGKGPEWQ…HSIRSGTSSY (61 aa)) is disordered. Residues 268–288 (LNLYRIVIILRLIILMFFFQY) traverse the membrane as a helical segment. The Extracellular portion of the chain corresponds to 289–296 (RVTHPVRD). Residues 297–317 (AYGLWLVSVICEIWFALSWLL) form a helical membrane-spanning segment. At 318–851 (DQFPKWYPIN…LLERLAYINT (534 aa)) the chain is on the cytoplasmic side. Positions 356, 362, 363, and 392 each coordinate UDP-alpha-D-glucose. The active site involves Asp-392. Residues 446–473 (VKERRAMKREYEEFKVRINALVAKAQKV) are a coiled coil. A UDP-alpha-D-glucose-binding site is contributed by Lys-533. Mn(2+) is bound by residues Lys-534 and Asp-558. The active site involves Asp-775. Residues 852–872 (IVYPITSIPLIAYCVLPAICL) form a helical membrane-spanning segment. The Extracellular portion of the chain corresponds to 873 to 884 (LTNKFIIPEISN). Residues 885 to 905 (YAGMFFILLFASIFATGILEL) traverse the membrane as a helical segment. At 906–920 (RWSGVGIEDWWRNEQ) the chain is on the cytoplasmic side. Residues 921–941 (FWVIGGTSAHLFAVFQGLLKV) traverse the membrane as a helical segment. The Extracellular segment spans residues 942–971 (LAGIDTNFTVTSKASDEDGDFAELYVFKWT). The N-linked (GlcNAc...) asparagine glycan is linked to Asn-948. Residues 972–992 (SLLIPPTTVLVINLVGMVAGI) form a helical membrane-spanning segment. Residues 993–1003 (SYAINSGYQSW) lie on the Cytoplasmic side of the membrane. Residues 1004–1024 (GPLFGKLFFSIWVILHLYPFL) traverse the membrane as a helical segment. The Extracellular portion of the chain corresponds to 1025-1033 (KGLMGRQNR). Residues 1034–1054 (TPTIVIVWSILLASIFSLLWV) form a helical membrane-spanning segment. Over 1055 to 1076 (KIDPFISPTQKAVALGQCGVNC) the chain is Cytoplasmic.

This sequence belongs to the glycosyltransferase 2 family. Plant cellulose synthase subfamily. Requires Zn(2+) as cofactor. Mn(2+) serves as cofactor.

The protein resides in the cell membrane. It carries out the reaction [(1-&gt;4)-beta-D-glucosyl](n) + UDP-alpha-D-glucose = [(1-&gt;4)-beta-D-glucosyl](n+1) + UDP + H(+). The protein operates within glycan metabolism; plant cellulose biosynthesis. Catalytic subunit of cellulose synthase terminal complexes ('rosettes'), required for beta-1,4-glucan microfibril crystallization, a major mechanism of the cell wall formation. This chain is Probable cellulose synthase A catalytic subunit 1 [UDP-forming] (CESA1), found in Oryza sativa subsp. indica (Rice).